The chain runs to 55 residues: Large ribosomal subunit protein bL33 (55 aa).

This sequence belongs to the bacterial ribosomal protein bL33 family.

This is Large ribosomal subunit protein bL33 from Hamiltonella defensa subsp. Acyrthosiphon pisum (strain 5AT).